Reading from the N-terminus, the 745-residue chain is Probable GMP synthase [glutamine-hydrolyzing] (745 aa).

The interval 1–37 (MKRSSSMLDINEDSQHSTNKAPPPKKAPEDRFDSANM) is disordered. The Glutamine amidotransferase type-1 domain maps to 60–252 (RIAILDFGAQ…LFKVVGCCGN (193 aa)). The For GATase activity role is filled by Cys138. Residues His226 and Glu228 contribute to the active site. The 209-residue stretch at 253 to 461 (FTIQNREQSC…LGLPESIVQR (209 aa)) folds into the GMPS ATP-PPase domain. Position 280–286 (280–286 (SGGVDSA)) interacts with ATP. Substrate is bound by residues Arg363, Asp563, Gln662, Lys737, and Glu743.

Homodimer.

The enzyme catalyses XMP + L-glutamine + ATP + H2O = GMP + L-glutamate + AMP + diphosphate + 2 H(+). Its pathway is purine metabolism; GMP biosynthesis; GMP from XMP (L-Gln route): step 1/1. This Caenorhabditis elegans protein is Probable GMP synthase [glutamine-hydrolyzing] (gmps-1).